The sequence spans 261 residues: ATP synthase subunit a (261 aa).

6 helical membrane passes run 45 to 65 (ITNV…ILVL), 107 to 127 (VMTL…PLSF), 133 to 153 (MAVT…LGFM), 162 to 182 (MFWV…IEVI), 209 to 229 (IAGF…VTAI), and 232 to 252 (LELL…CVYL).

This sequence belongs to the ATPase A chain family. As to quaternary structure, F-type ATPases have 2 components, CF(1) - the catalytic core - and CF(0) - the membrane proton channel. CF(1) has five subunits: alpha(3), beta(3), gamma(1), delta(1), epsilon(1). CF(0) has four main subunits: a, b, b' and c.

The protein resides in the cell inner membrane. Its function is as follows. Key component of the proton channel; it plays a direct role in the translocation of protons across the membrane. The sequence is that of ATP synthase subunit a from Cereibacter sphaeroides (strain ATCC 17025 / ATH 2.4.3) (Rhodobacter sphaeroides).